We begin with the raw amino-acid sequence, 462 residues long: ATP synthase subunit beta 1 (462 aa).

152–159 (GGAGVGKT) contributes to the ATP binding site.

The protein belongs to the ATPase alpha/beta chains family. As to quaternary structure, F-type ATPases have 2 components, CF(1) - the catalytic core - and CF(0) - the membrane proton channel. CF(1) has five subunits: alpha(3), beta(3), gamma(1), delta(1), epsilon(1). CF(0) has four main subunits: a(1), b(1), b'(1) and c(9-12).

The protein localises to the cell inner membrane. It catalyses the reaction ATP + H2O + 4 H(+)(in) = ADP + phosphate + 5 H(+)(out). In terms of biological role, produces ATP from ADP in the presence of a proton gradient across the membrane. The catalytic sites are hosted primarily by the beta subunits. In Dinoroseobacter shibae (strain DSM 16493 / NCIMB 14021 / DFL 12), this protein is ATP synthase subunit beta 1.